We begin with the raw amino-acid sequence, 79 residues long: Cytochrome c oxidase subunit 7A1, mitochondrial (79 aa).

The N-terminal 21 residues, 1-21, are a transit peptide targeting the mitochondrion; sequence MQALRVSRALIRSFNTTARNR. Residues 22 to 46 are Mitochondrial matrix-facing; that stretch reads FQNRVPEKQKLFQEDNDIPLYLKGG. The chain crosses the membrane as a helical span at residues 47 to 75; that stretch reads IVDNILYRVTMGLCLGGSAYSMYCLGWAS. Topologically, residues 76 to 79 are mitochondrial intermembrane; that stretch reads FPRN.

This sequence belongs to the cytochrome c oxidase VIIa family. Component of the complex IV (CIV, cytochrome c oxidase), a multisubunit enzyme composed of 14 subunits. The complex is composed of a catalytic core of 3 subunits MT-CO1, MT-CO2 and MT-CO3, encoded in the mitochondrial DNA, and 11 supernumerary subunits COX4I1 (or COX4I2), COX5A, COX5B, COX6A2 (or COX6A1), COX6B1 (or COX6B2), COX6C, COX7A1 (or COX7A2), COX7B, COX7C, COX8B and NDUFA4, which are encoded in the nuclear genome. The complex exists as a monomer or a dimer and forms supercomplexes (SCs) in the inner mitochondrial membrane with NADH-ubiquinone oxidoreductase (complex I, CI) and ubiquinol-cytochrome c oxidoreductase (cytochrome b-c1 complex, complex III, CIII), resulting in different assemblies (supercomplex SCI(1)III(2)IV(1) and megacomplex MCI(2)III(2)IV(2)).

It localises to the mitochondrion inner membrane. It participates in energy metabolism; oxidative phosphorylation. In terms of biological role, component of the mitochondrial respiratory complex IV (CIV, also named cytochrome c oxidase complex), the last enzyme in the mitochondrial electron transport chain which drives oxidative phosphorylation. The CIV complex is the component of the respiratory chain that catalyzes the reduction of oxygen to water. Acts as an assembly factor that specifically drives the homodimerization of CIV complexes, mediating the formation of mitochondrial respiratory supercomplexes (respirasomes) containing two CIV: supercomplxes with two molecules of CIV show improved activity. Despite being highly expressed in brown adipose tissue, not required for thermogenesis. The protein is Cytochrome c oxidase subunit 7A1, mitochondrial (COX7A1) of Trachypithecus cristatus (Silvered leaf-monkey).